Here is a 272-residue protein sequence, read N- to C-terminus: uncharacterized protein (272 aa).

Residues Asp-71 and Glu-163 contribute to the active site.

The protein belongs to the glycosyl hydrolase 25 family.

This is an uncharacterized protein from Escherichia coli (strain K12).